The following is a 257-amino-acid chain: Protein TONNEAU 1b (257 aa).

The LisH domain maps to serine 73–lysine 105. Disordered stretches follow at residues glutamine 148–proline 216 and leucine 231–aspartate 257. Positions serine 187–serine 199 are enriched in low complexity. Basic and acidic residues-rich tracts occupy residues tyrosine 201–threonine 212 and asparagine 244–aspartate 257.

In terms of assembly, interacts with CEN1, LNG1/TRM2 and LNG2/TRM1 (via C-terminus).

The protein localises to the cytoplasm. It is found in the cytoskeleton. Functionally, involved in the control of the dynamic organization of the cortical cytoskeleton. May play a role in the organization of microtubule arrays at the centrosome through interaction with centrin 1 (CEN1). The polypeptide is Protein TONNEAU 1b (TON1B) (Arabidopsis thaliana (Mouse-ear cress)).